Reading from the N-terminus, the 117-residue chain is Non-specific lipid-transfer protein 2B (117 aa).

The N-terminal stretch at 1 to 25 (MARAQLVLVALVAALLLAGPHTTMA) is a signal peptide. Cystine bridges form between cysteine 29–cysteine 76, cysteine 39–cysteine 53, cysteine 54–cysteine 99, and cysteine 74–cysteine 113.

Belongs to the plant LTP family. In terms of tissue distribution, expressed in roots, mesocotyls and developing leaves.

Its function is as follows. Plant non-specific lipid-transfer proteins transfer phospholipids as well as galactolipids across membranes. May play a role in wax or cutin deposition in the cell walls of expanding epidermal cells and certain secretory tissues. The sequence is that of Non-specific lipid-transfer protein 2B (LTP2-B) from Oryza sativa subsp. japonica (Rice).